Here is a 33-residue protein sequence, read N- to C-terminus: Brevinin-2DYb (33 aa).

C27 and C33 are joined by a disulfide.

As to expression, expressed by the skin glands.

Its subcellular location is the secreted. Its function is as follows. Antimicrobial peptide. Active against the Gram-positive bacterium S.aureus (MIC=30 uM) and the Gram-negative bacterium E.coli (MIC=30 uM). The polypeptide is Brevinin-2DYb (Rana dybowskii (Dybovsky's frog)).